The following is a 38-amino-acid chain: Large ribosomal subunit protein bL36 (38 aa).

This sequence belongs to the bacterial ribosomal protein bL36 family.

This Pseudoalteromonas atlantica (strain T6c / ATCC BAA-1087) protein is Large ribosomal subunit protein bL36.